The primary structure comprises 169 residues: uncharacterized protein (169 aa).

The next 2 helical transmembrane spans lie at 10–30 (NVHMYDVAIILILIIVVFKLI) and 149–169 (IPLAFVQMIAISIALICLLIP).

The protein localises to the membrane. This is an uncharacterized protein from Dictyostelium discoideum (Social amoeba).